Reading from the N-terminus, the 416-residue chain is Thioredoxin domain-containing protein 5 homolog (416 aa).

A signal peptide spans 1–25 (MLTRSILSVAVCGLLLSPLLPITRA). Thioredoxin domains lie at 26 to 145 (SQEE…KELS), 150 to 272 (ADLG…KMVG), and 293 to 412 (AGEE…KFLG). Disulfide bonds link Cys65–Cys68, Cys194–Cys197, and Cys331–Cys334. Positions 413-416 (HDEL) match the Prevents secretion from ER motif.

Belongs to the protein disulfide isomerase family.

The protein resides in the endoplasmic reticulum. The protein localises to the cell surface. In terms of biological role, possesses thioredoxin activity. Acts as a ligand for Drpr and is required for the phagocytosis of apoptotic cells. Binds to the extracellular region of Drpr and augments Drpr tyrosine phosphorylation. In Drosophila melanogaster (Fruit fly), this protein is Thioredoxin domain-containing protein 5 homolog.